Consider the following 338-residue polypeptide: STEAP1 protein (338 aa).

The next 2 membrane-spanning stretches (helical) occupy residues 70–90 and 118–138; these read WHLP…YTLL and PMVS…AAIV. Positions 117 to 264 constitute a Ferric oxidoreductase domain; sequence LPMVSITLLA…TLGIVSLLLG (148 aa). Q139 and R160 together coordinate FAD. 4 helical membrane passes run 163-183, 217-237, 252-272, and 290-310; these read FGLL…SYPM, IYVS…VTSI, IQST…LIFA, and FMIA…LLLP. Position 174 (H174) interacts with heme b. The FAD site is built by S236 and Q253. H267 serves as a coordination point for heme b.

This sequence belongs to the STEAP family. Homotrimer. It depends on FAD as a cofactor. Heme b is required as a cofactor.

It is found in the endosome membrane. The protein localises to the cell membrane. In terms of biological role, does not function as a metalloreductase due to the absence of binding sites for the electron-donating substrate NADPH. This chain is STEAP1 protein (STEAP1), found in Sus scrofa (Pig).